Consider the following 306-residue polypeptide: Porphobilinogen deaminase (306 aa).

S-(dipyrrolylmethanemethyl)cysteine is present on Cys-241.

This sequence belongs to the HMBS family. In terms of assembly, monomer. Requires dipyrromethane as cofactor.

The catalysed reaction is 4 porphobilinogen + H2O = hydroxymethylbilane + 4 NH4(+). The protein operates within porphyrin-containing compound metabolism; protoporphyrin-IX biosynthesis; coproporphyrinogen-III from 5-aminolevulinate: step 2/4. Tetrapolymerization of the monopyrrole PBG into the hydroxymethylbilane pre-uroporphyrinogen in several discrete steps. This Acidithiobacillus ferrooxidans (strain ATCC 23270 / DSM 14882 / CIP 104768 / NCIMB 8455) (Ferrobacillus ferrooxidans (strain ATCC 23270)) protein is Porphobilinogen deaminase.